The chain runs to 447 residues: Nuclear envelope integral membrane protein 2 (447 aa).

The first 28 residues, 1–28 (MGPRRLPWARPGPALGLLLLALAGAVPA), serve as a signal peptide directing secretion. The next 5 membrane-spanning stretches (helical) occupy residues 144–164 (EMLDGKLLFLFAAGIFLFHFA), 173–193 (FFYLSGIILGVLALLVFVLLA), 202–222 (STFWILLSGCWMSSLYLIYCF), 235–255 (IYVLGYFVAVGTLSFATCYQH), and 275–295 (AFVFIYCGVNIPQVAYAIIAV). The tract at residues 410–438 (TRTESEQDETTSYIHEGDDENEDEIHEPI) is disordered.

Belongs to the NEMP family.

Its subcellular location is the nucleus inner membrane. The sequence is that of Nuclear envelope integral membrane protein 2 (NEMP2) from Gallus gallus (Chicken).